Reading from the N-terminus, the 736-residue chain is Elongation factor 2 (736 aa).

A tr-type G domain is found at 18 to 261 (EQVRNIGITA…MVVKFIPNPR (244 aa)). Residues 27-34 (AHVDHGKT), 93-97 (DTPGH), and 147-150 (NKVD) each bind GTP. H602 carries the post-translational modification Diphthamide.

The protein belongs to the TRAFAC class translation factor GTPase superfamily. Classic translation factor GTPase family. EF-G/EF-2 subfamily.

The protein resides in the cytoplasm. Functionally, catalyzes the GTP-dependent ribosomal translocation step during translation elongation. During this step, the ribosome changes from the pre-translocational (PRE) to the post-translocational (POST) state as the newly formed A-site-bound peptidyl-tRNA and P-site-bound deacylated tRNA move to the P and E sites, respectively. Catalyzes the coordinated movement of the two tRNA molecules, the mRNA and conformational changes in the ribosome. This is Elongation factor 2 from Staphylothermus marinus (strain ATCC 43588 / DSM 3639 / JCM 9404 / F1).